The primary structure comprises 126 residues: Small ribosomal subunit protein uS11 (126 aa).

Belongs to the universal ribosomal protein uS11 family. In terms of assembly, part of the 30S ribosomal subunit. Interacts with proteins S7 and S18. Binds to IF-3.

Functionally, located on the platform of the 30S subunit, it bridges several disparate RNA helices of the 16S rRNA. Forms part of the Shine-Dalgarno cleft in the 70S ribosome. The polypeptide is Small ribosomal subunit protein uS11 (Orientia tsutsugamushi (strain Boryong) (Rickettsia tsutsugamushi)).